The sequence spans 145 residues: MGCGGSRADAIEPRYYESWTRETESTWLTYTDSDAPPSAAAPDSGPEAGGLHSGMLEDGLPSNGVPRSTAPGGIPNPEKKTNCETQCPNPQSLSSGPLTQKQNGLQTTEAKRDAKRMPAKEVTINVTDSIQQMDRSRRITKNCVN.

Residue Gly-2 is the site of N-myristoyl glycine attachment. Residue Cys-3 is the site of S-palmitoyl cysteine attachment. The tract at residues 3-35 (CGGSRADAIEPRYYESWTRETESTWLTYTDSDA) is interaction with CAMK2A. Positions 27–119 (WLTYTDSDAP…AKRDAKRMPA (93 aa)) are disordered. Positions 32–46 (DSDAPPSAAAPDSGP) are enriched in low complexity. A compositionally biased stretch (polar residues) spans 83–108 (CETQCPNPQSLSSGPLTQKQNGLQTT). Basic and acidic residues predominate over residues 109–119 (EAKRDAKRMPA).

Interacts with CAMK2A. In terms of processing, palmitoylation and myristoylation target the protein to the lipid rafts. In terms of tissue distribution, predominantly expressed in neuroectoderm-derived tissues. Expressed in the brain and spinal cord, and at low levels, in the adrenal gland. In the bone marrow, confined to the CD34+ progenitor cells. Not found in peripheral blood mononuclear cells, nor lymph nodes. Tends to be expressed at high levels in acute myeloid leukemia and glioblastoma cells.

It is found in the cytoplasm. It localises to the synapse. Its subcellular location is the synaptosome. The protein resides in the membrane raft. The protein localises to the postsynaptic density. Functionally, may play a synaptic role at the postsynaptic lipid rafts possibly through interaction with CAMK2A. This chain is Brain and acute leukemia cytoplasmic protein, found in Homo sapiens (Human).